A 175-amino-acid polypeptide reads, in one-letter code: Alkyl hydroperoxide reductase AhpD (175 aa).

Cys131 acts as the Proton donor in catalysis. An intrachain disulfide couples Cys131 to Cys134. Cys134 (cysteine sulfenic acid (-SOH) intermediate) is an active-site residue.

This sequence belongs to the AhpD family.

The catalysed reaction is N(6)-[(R)-dihydrolipoyl]-L-lysyl-[lipoyl-carrier protein] + a hydroperoxide = N(6)-[(R)-lipoyl]-L-lysyl-[lipoyl-carrier protein] + an alcohol + H2O. Antioxidant protein with alkyl hydroperoxidase activity. Required for the reduction of the AhpC active site cysteine residues and for the regeneration of the AhpC enzyme activity. The polypeptide is Alkyl hydroperoxide reductase AhpD (Brucella canis (strain ATCC 23365 / NCTC 10854 / RM-666)).